The chain runs to 259 residues: Leucine-rich repeat-containing protein 3B (259 aa).

The first 33 residues, 1–33, serve as a signal peptide directing secretion; the sequence is MNLVDLWLSRSLSMCLLLQSFVLMILCFHSASM. An LRRNT domain is found at 34-64; the sequence is CPKGCLCSSSGGLNVTCSNANLKEIPRDLPP. The N-linked (GlcNAc...) asparagine glycan is linked to asparagine 47. LRR repeat units lie at residues 65–86, 89–110, and 114–135; these read ETVLLYLDSNQITSIPNEIFKD, QLRVLNLSKNGIEFIDEHAFKG, and TLQTLDLSDNRIQSVHKNAFNN. N-linked (GlcNAc...) asparagine glycosylation occurs at asparagine 94. The 53-residue stretch at 145–197 folds into the LRRCT domain; the sequence is NPWHCDCTLQQVLRSMASNHETAHNVICKTSVLDEHAGRPFLNAANDADLCNL. Residues 205-225 form a helical membrane-spanning segment; it reads AMLVTMFGWFTMVISYVVYYV.

This sequence belongs to the LRRC3 family.

Its subcellular location is the membrane. In Mus musculus (Mouse), this protein is Leucine-rich repeat-containing protein 3B (Lrrc3b).